The following is a 192-amino-acid chain: Transcriptional activator GvpE (192 aa).

Lysine 140–arginine 145 lines the DNA pocket. Positions glutamate 150–tyrosine 181 are leucine-zipper.

Interacts with GvpD, also with c-GvpD from H.salinarum.

It is found in the cytoplasm. The amount of protein that accumulates is controlled by GvpD; GvpD causes a reduction in the amount of GvpE, preventing accumulation of excessive amounts of gas vesicles. In terms of biological role, plays a regulatory role in gas vesicle synthesis, activates transcription of the gvpA operon, and probably of the gvpD operon. Gas vesicles are hollow, gas filled proteinaceous nanostructures found in some microorganisms. They allow positioning of halobacteria at the optimal depth for growth in the poorly aerated, shallow brine pools of their habitat. Functionally, expression of a 9.5 kb mc-vac DNA fragment containing 2 divergently transcribed regions (gvpD-gvpE-gvpF-gvpG-gvpH-gvpI-gvpJ-gvpK-gvpL-gvpM and gvpA-gvpC-gvpN-gvpO) allows H.volcanii to produce gas vesicles. The polypeptide is Transcriptional activator GvpE (Haloferax mediterranei (strain ATCC 33500 / DSM 1411 / JCM 8866 / NBRC 14739 / NCIMB 2177 / R-4) (Halobacterium mediterranei)).